The following is a 457-amino-acid chain: Protein OS-9 homolog (457 aa).

An N-terminal signal peptide occupies residues 1 to 22 (MIFLPVTSVVFAISWIYSGVSA). 2 N-linked (GlcNAc...) asparagine glycosylation sites follow: Asn-47 and Asn-71. In terms of domain architecture, MRH spans 104 to 222 (NPIEMNTVPI…RLFLPQLCEL (119 aa)). An a mannooligosaccharide derivative-binding site is contributed by Trp-116. N-linked (GlcNAc...) asparagine glycosylation is found at Asn-142 and Asn-147. Intrachain disulfides connect Cys-174-Cys-208 and Cys-189-Cys-220. Residues Asp-175, Arg-181, Glu-204, and Tyr-210 each contribute to the a mannooligosaccharide derivative site. N-linked (GlcNAc...) asparagine glycosylation is present at Asn-389.

The protein belongs to the OS-9 family. Interacts with missfolded ER lumenal proteins.

It is found in the endoplasmic reticulum membrane. In terms of biological role, lectin involved in the quality control of the secretory pathway. As a member of the endoplasmic reticulum-associated degradation lumenal (ERAD-L) surveillance system, targets misfolded endoplasmic reticulum lumenal glycoproteins for degradation. This Kluyveromyces lactis (strain ATCC 8585 / CBS 2359 / DSM 70799 / NBRC 1267 / NRRL Y-1140 / WM37) (Yeast) protein is Protein OS-9 homolog (YOS9).